We begin with the raw amino-acid sequence, 465 residues long: Phosphatidylserine synthase 1 (465 aa).

Residues 1 to 35 (MATTFRSQTLSKDDVNYRMHFRMINEQQVEDITIQ) lie on the Cytoplasmic side of the membrane. Residues 36–56 (FFYKPHTISLLTVTVLSLMYF) form a helical membrane-spanning segment. Residues 57 to 70 (AFTRDDGDPDSNLR) lie on the Lumenal side of the membrane. Residues 71–91 (VGLILLVSFFLVISVLAFPNG) form a helical membrane-spanning segment. Over 92–102 (PFTRPHPAIWR) the chain is Cytoplasmic. Residues 103–123 (IVFGLSVLYFLFLVFIIFLNW) form a helical membrane-spanning segment. Topologically, residues 124-286 (DQVKALMFWL…WLDPKSSLQR (163 aa)) are lumenal. Residues 287–307 (VMGVYLFMIIWQLTELNTFFL) traverse the membrane as a helical segment. At 308–309 (KH) the chain is on the cytoplasmic side. Residues 310-330 (IFVFPACHALSWCRILFIGII) form a helical membrane-spanning segment. Topologically, residues 331–355 (TAPTVRQYYAYLTDTQCKRVGTQCW) are lumenal. The helical transmembrane segment at 356 to 376 (VFGAIAFLEALACIKFGQDLF) threads the bilayer. Residues 377–380 (SKTQ) lie on the Cytoplasmic side of the membrane. Residues 381 to 401 (ILYVILWLVCLAFITFLCLYV) form a helical membrane-spanning segment. Over 402–465 (MVWYAENYGP…DSRTINGMEK (64 aa)) the chain is Lumenal. The interval 446–465 (CSTRKRRDSGDSRTINGMEK) is disordered.

Belongs to the phosphatidyl serine synthase family.

The protein localises to the endoplasmic reticulum membrane. The catalysed reaction is a 1,2-diacyl-sn-glycero-3-phosphoethanolamine + L-serine = a 1,2-diacyl-sn-glycero-3-phospho-L-serine + ethanolamine. It carries out the reaction a 1,2-diacyl-sn-glycero-3-phosphocholine + L-serine = a 1,2-diacyl-sn-glycero-3-phospho-L-serine + choline. It functions in the pathway phospholipid metabolism; phosphatidylserine biosynthesis. Functionally, catalyzes a base-exchange reaction in which the polar head group of phosphatidylethanolamine (PE) or phosphatidylcholine (PC) is replaced by L-serine. Catalyzes mainly the conversion of phosphatidylcholine but also converts, in vitro and to a lesser extent, phosphatidylethanolamine. The polypeptide is Phosphatidylserine synthase 1 (ptdss1) (Danio rerio (Zebrafish)).